The primary structure comprises 716 residues: DNA ligase (716 aa).

Residues 49–53 (DAAYD), 98–99 (SL), and glutamate 132 contribute to the NAD(+) site. The N6-AMP-lysine intermediate role is filled by lysine 134. 4 residues coordinate NAD(+): arginine 155, glutamate 192, lysine 308, and lysine 332. 4 residues coordinate Zn(2+): cysteine 437, cysteine 439, cysteine 461, and cysteine 467. Positions 638-716 (KRNSPIATKT…EDEWLQLIGE (79 aa)) constitute a BRCT domain.

This sequence belongs to the NAD-dependent DNA ligase family. LigA subfamily. It depends on Mg(2+) as a cofactor. The cofactor is Mn(2+).

It carries out the reaction NAD(+) + (deoxyribonucleotide)n-3'-hydroxyl + 5'-phospho-(deoxyribonucleotide)m = (deoxyribonucleotide)n+m + AMP + beta-nicotinamide D-nucleotide.. DNA ligase that catalyzes the formation of phosphodiester linkages between 5'-phosphoryl and 3'-hydroxyl groups in double-stranded DNA using NAD as a coenzyme and as the energy source for the reaction. It is essential for DNA replication and repair of damaged DNA. This is DNA ligase from Bradyrhizobium sp. (strain ORS 278).